Here is a 300-residue protein sequence, read N- to C-terminus: Porphobilinogen deaminase (300 aa).

S-(dipyrrolylmethanemethyl)cysteine is present on cysteine 241.

This sequence belongs to the HMBS family. In terms of assembly, monomer. The cofactor is dipyrromethane.

The catalysed reaction is 4 porphobilinogen + H2O = hydroxymethylbilane + 4 NH4(+). The protein operates within porphyrin-containing compound metabolism; protoporphyrin-IX biosynthesis; coproporphyrinogen-III from 5-aminolevulinate: step 2/4. Tetrapolymerization of the monopyrrole PBG into the hydroxymethylbilane pre-uroporphyrinogen in several discrete steps. The polypeptide is Porphobilinogen deaminase (Sorangium cellulosum (strain So ce56) (Polyangium cellulosum (strain So ce56))).